A 413-amino-acid polypeptide reads, in one-letter code: Clusterin-associated protein 1 (413 aa).

The stretch at 198–291 forms a coiled coil; sequence KTKDLLNNVA…ERFEEAKNTL (94 aa). Residues 305 to 413 form a disordered region; the sequence is LLKSGSNDDS…EPLDESDNDF (109 aa). Acidic residues-rich tracts occupy residues 312 to 328 and 360 to 388; these read DDSDIDIQEDDESDSEL and DSDDNEDSEESEIDMEDDDDEDDDLEDES. Phosphoserine occurs at positions 314, 324, and 326. S409 carries the post-translational modification Phosphoserine.

It belongs to the CLUAP1 family. In terms of assembly, interacts with CLU/clusterin. Interacts with UBXN10; the interaction is direct. Expressed in testis, thyroid and trachea and to a lower extent in spinal cord and adrenal gland. Highly expressed in colon cancer and osteosarcoma cell lines.

The protein resides in the cell projection. Its subcellular location is the cilium. It localises to the nucleus. Its function is as follows. Required for cilia biogenesis. Appears to function within the multiple intraflagellar transport complex B (IFT-B). Key regulator of hedgehog signaling. This is Clusterin-associated protein 1 (CLUAP1) from Homo sapiens (Human).